Here is a 437-residue protein sequence, read N- to C-terminus: Eukaryotic peptide chain release factor subunit 1 (437 aa).

The short motif at 61–64 (NIKS) is the NIKS motif; plays an important role in translational termination element.

The protein belongs to the eukaryotic release factor 1 family. As to quaternary structure, component of the eRF1-eRF3-GTP ternary complex, composed of ETF1/ERF1 and eRF3 (GSPT1/ERF3A or GSPT2/ERF3B) and GTP.

The protein resides in the cytoplasm. Component of the eRF1-eRF3-GTP ternary complex, a ternary complex that mediates translation termination in response to the termination codons. The eRF1-eRF3-GTP complex binds to a stop codon in the ribosomal A-site. ETF1/ERF1 is responsible for stop codon recognition and inducing hydrolysis of peptidyl-tRNA. Following GTP hydrolysis, eRF3 (GSPT1/ERF3A or GSPT2/ERF3B) dissociates, permitting ETF1/eRF1 to accommodate fully in the A-site, followed by hydrolysis of peptidyl-tRNA. The chain is Eukaryotic peptide chain release factor subunit 1 (etf1) from Xenopus tropicalis (Western clawed frog).